A 665-amino-acid polypeptide reads, in one-letter code: Alpha-1,4-glucan:maltose-1-phosphate maltosyltransferase (665 aa).

Lysine 255, glutamine 315, and aspartate 350 together coordinate alpha-maltose 1-phosphate. Aspartate 386 acts as the Nucleophile in catalysis. Residue asparagine 387 participates in alpha-maltose 1-phosphate binding. Glutamate 415 functions as the Proton donor in the catalytic mechanism. 526 to 527 provides a ligand contact to alpha-maltose 1-phosphate; the sequence is KY.

This sequence belongs to the glycosyl hydrolase 13 family. GlgE subfamily. In terms of assembly, homodimer.

It catalyses the reaction alpha-maltose 1-phosphate + [(1-&gt;4)-alpha-D-glucosyl](n) = [(1-&gt;4)-alpha-D-glucosyl](n+2) + phosphate. In terms of biological role, maltosyltransferase that uses maltose 1-phosphate (M1P) as the sugar donor to elongate linear or branched alpha-(1-&gt;4)-glucans. Is involved in a branched alpha-glucan biosynthetic pathway from trehalose, together with TreS, Mak and GlgB. The protein is Alpha-1,4-glucan:maltose-1-phosphate maltosyltransferase of Myxococcus xanthus (strain DK1622).